Reading from the N-terminus, the 228-residue chain is Probable septum site-determining protein MinC (228 aa).

Belongs to the MinC family. As to quaternary structure, interacts with MinD and FtsZ.

Cell division inhibitor that blocks the formation of polar Z ring septums. Rapidly oscillates between the poles of the cell to destabilize FtsZ filaments that have formed before they mature into polar Z rings. Prevents FtsZ polymerization. The protein is Probable septum site-determining protein MinC of Yersinia pseudotuberculosis serotype O:1b (strain IP 31758).